A 545-amino-acid polypeptide reads, in one-letter code: T-complex protein 1 subunit gamma (545 aa).

The residue at position 1 (methionine 1) is an N-acetylmethionine. The segment at 1–24 is disordered; sequence MMGHRPVLVLSQNTKRESGRKVQS. Serine 11 bears the Phosphoserine mark. A Glycyl lysine isopeptide (Lys-Gly) (interchain with G-Cter in SUMO2) cross-link involves residue lysine 15. Glycine 42 is a binding site for ADP. Glycine 42 lines the ATP pocket. Aspartate 93 contributes to the Mg(2+) binding site. Glycine 94, threonine 95, threonine 96, serine 97, threonine 162, and lysine 163 together coordinate ADP. Positions 94, 95, and 96 each coordinate ATP. Serine 170 bears the Phosphoserine mark. Lysine 222 bears the N6-acetyllysine mark. Phosphoserine occurs at positions 243 and 244. Tyrosine 247 is modified (phosphotyrosine). Residues lysine 248 and lysine 249 each participate in a glycyl lysine isopeptide (Lys-Gly) (interchain with G-Cter in SUMO2) cross-link. Serine 252 is subject to Phosphoserine. A disulfide bridge links cysteine 366 with cysteine 372. Lysine 381 participates in a covalent cross-link: Glycyl lysine isopeptide (Lys-Gly) (interchain with G-Cter in SUMO2). Glycine 411 contacts ADP. Glycine 411 is an ATP binding site. Residues threonine 430 and threonine 459 each carry the phosphothreonine modification. Residues glycine 482, glutamate 483, glutamate 497, and lysine 502 each coordinate ADP. Glycine 482 contacts ATP. Glutamate 497 serves as a coordination point for ATP. The segment at 526–545 is disordered; that stretch reads HKKKGDDQSRQGGAPDAGQE.

This sequence belongs to the TCP-1 chaperonin family. In terms of assembly, component of the chaperonin-containing T-complex (TRiC), a hexadecamer composed of two identical back-to-back stacked rings enclosing a protein folding chamber. Each ring is made up of eight different subunits: TCP1/CCT1, CCT2, CCT3, CCT4, CCT5, CCT6A/CCT6, CCT7, CCT8. Interacts with PACRG. Interacts with DNAAF4. Interacts with DLEC1.

The protein resides in the cytoplasm. It catalyses the reaction ATP + H2O = ADP + phosphate + H(+). Functionally, component of the chaperonin-containing T-complex (TRiC), a molecular chaperone complex that assists the folding of actin, tubulin and other proteins upon ATP hydrolysis. The TRiC complex mediates the folding of WRAP53/TCAB1, thereby regulating telomere maintenance. As part of the TRiC complex may play a role in the assembly of BBSome, a complex involved in ciliogenesis regulating transports vesicles to the cilia. The sequence is that of T-complex protein 1 subunit gamma (CCT3) from Bos taurus (Bovine).